Consider the following 211-residue polypeptide: Probable GTP-binding protein EngB (211 aa).

The region spanning 13-188 (SGYEIAFAGR…ASVMAGRLHF (176 aa)) is the EngB-type G domain. GTP is bound by residues 21 to 28 (GRSNAGKS), 48 to 52 (GRTQM), 67 to 70 (DLPG), 134 to 137 (TKAD), and 167 to 169 (FSS). Mg(2+) contacts are provided by serine 28 and threonine 50.

Belongs to the TRAFAC class TrmE-Era-EngA-EngB-Septin-like GTPase superfamily. EngB GTPase family. Requires Mg(2+) as cofactor.

Its function is as follows. Necessary for normal cell division and for the maintenance of normal septation. The polypeptide is Probable GTP-binding protein EngB (Acinetobacter baumannii (strain ATCC 17978 / DSM 105126 / CIP 53.77 / LMG 1025 / NCDC KC755 / 5377)).